Reading from the N-terminus, the 200-residue chain is dTTP/UTP pyrophosphatase (200 aa).

The Proton acceptor role is filled by D80.

The protein belongs to the Maf family. YhdE subfamily. Requires a divalent metal cation as cofactor.

Its subcellular location is the cytoplasm. The enzyme catalyses dTTP + H2O = dTMP + diphosphate + H(+). The catalysed reaction is UTP + H2O = UMP + diphosphate + H(+). Nucleoside triphosphate pyrophosphatase that hydrolyzes dTTP and UTP. May have a dual role in cell division arrest and in preventing the incorporation of modified nucleotides into cellular nucleic acids. The sequence is that of dTTP/UTP pyrophosphatase from Pasteurella multocida (strain Pm70).